The following is a 328-amino-acid chain: uncharacterized protein (328 aa).

This is an uncharacterized protein from Bacillus anthracis.